Here is a 426-residue protein sequence, read N- to C-terminus: Dihydroorotase (426 aa).

2 residues coordinate Zn(2+): histidine 58 and histidine 60. Residues 60-62 and asparagine 92 each bind substrate; that span reads HLR. The Zn(2+) site is built by aspartate 150, histidine 177, and histidine 230. Asparagine 276 serves as a coordination point for substrate. Aspartate 303 is a binding site for Zn(2+). The active site involves aspartate 303. Substrate-binding positions include histidine 307 and 321-322; that span reads FG.

It belongs to the metallo-dependent hydrolases superfamily. DHOase family. Class I DHOase subfamily. The cofactor is Zn(2+).

The enzyme catalyses (S)-dihydroorotate + H2O = N-carbamoyl-L-aspartate + H(+). It functions in the pathway pyrimidine metabolism; UMP biosynthesis via de novo pathway; (S)-dihydroorotate from bicarbonate: step 3/3. In terms of biological role, catalyzes the reversible cyclization of carbamoyl aspartate to dihydroorotate. This Listeria monocytogenes serotype 4b (strain CLIP80459) protein is Dihydroorotase.